Reading from the N-terminus, the 513-residue chain is Cytochrome P450 monooxygenase sthF (513 aa).

A run of 2 helical transmembrane segments spans residues 13–33 and 212–232; these read FPSL…YIFI and MLHP…IILL. C452 contacts heme.

This sequence belongs to the cytochrome P450 family. It depends on heme as a cofactor.

The protein localises to the membrane. It carries out the reaction dehydroprobetaenone I + NADPH + O2 + H(+) = epoxybetaenone + NADP(+) + H2O. It catalyses the reaction dehydroprobetaenone I + 3 NADPH + 3 O2 + 3 H(+) = betaenone C + 3 NADP(+) + 3 H2O. The enzyme catalyses probetaenone I + 3 NADPH + 3 O2 + 3 H(+) = betaenone B + 3 NADP(+) + 3 H2O. The protein operates within mycotoxin biosynthesis. In terms of biological role, cytochrome P450 monooxygenase; part of the gene cluster that mediates the biosynthesis of the phytotoxin stemphyloxin II. The first step of the pathway is the synthesis of dehydroprobetaenone I by the polyketide synthase sthA and the enoyl reductase sthE via condensation of one acetyl-CoA starter unit with 7 malonyl-CoA units and 5 methylations. The C-terminal reductase (R) domain of sthA catalyzes the reductive release of the polyketide chain. Because sthA lacks a designated enoylreductase (ER) domain, the required activity is provided the enoyl reductase sthE. The short-chain dehydrogenase/reductase sthC then catalyzes reduction of dehydroprobetaenone I to probetaenone I. The cytochrome P450 monooxygenase sthF catalyzes successive epoxidation, oxidation (resulting from epoxide opening) and hydroxylation to install a tertiary alcohol in the decaline ring to yield betaenone C from dehydroprobetaenone I and betaenone B from probetaenone I. The FAD-linked oxidoreductase sthB is responsible for the conversion of betaenone C to betaenone A via an intramolecular aldol reaction between C-1 and C-17 to form the bridged tricyclic system in betaenone A. Finally, the cytochrome P450 monooxygenase sthD catalyzes the hydroxylation of C-15 to afford the final metabolite stemphyloxin II. The chain is Cytochrome P450 monooxygenase sthF from Phaeosphaeria nodorum (strain SN15 / ATCC MYA-4574 / FGSC 10173) (Glume blotch fungus).